The following is a 450-amino-acid chain: Hyaluronidase-1 (450 aa).

A signal peptide spans 1 to 35; it reads MRPFSLEVSLHLPWAMAAHLLPVCTLFLNLLSMTQ. 2 cysteine pairs are disulfide-bonded: C58–C348 and C222–C236. N-linked (GlcNAc...) asparagine glycosylation occurs at N85. E146 functions as the Proton donor in the catalytic mechanism. N-linked (GlcNAc...) asparagine glycosylation is found at N231 and N365. 3 disulfide bridges follow: C373–C384, C378–C433, and C435–C444. N-linked (GlcNAc...) asparagine glycosylation occurs at N398. The EGF-like domain occupies 433-444; that stretch reads CRCYRGWRGTRC.

This sequence belongs to the glycosyl hydrolase 56 family.

It localises to the secreted. It is found in the lysosome. The catalysed reaction is Random hydrolysis of (1-&gt;4)-linkages between N-acetyl-beta-D-glucosamine and D-glucuronate residues in hyaluronate.. Functionally, may have a role in promoting tumor progression. May block the TGFB1-enhanced cell growth. In Bos taurus (Bovine), this protein is Hyaluronidase-1 (HYAL1).